Here is a 529-residue protein sequence, read N- to C-terminus: tRNA-2-methylthio-N(6)-dimethylallyladenosine synthase (529 aa).

In terms of domain architecture, MTTase N-terminal spans 18 to 134; that stretch reads RTYQVRTYGC…LPTLLERARH (117 aa). [4Fe-4S] cluster-binding residues include Cys-27, Cys-63, Cys-97, Cys-171, Cys-175, and Cys-178. The Radical SAM core domain occupies 157 to 404; it reads RESAYAGWVS…IELQERISLE (248 aa). A TRAM domain is found at 407-486; sequence QAQVGRTLEL…PHHLIADGAL (80 aa).

It belongs to the methylthiotransferase family. MiaB subfamily. As to quaternary structure, monomer. Requires [4Fe-4S] cluster as cofactor.

Its subcellular location is the cytoplasm. It carries out the reaction N(6)-dimethylallyladenosine(37) in tRNA + (sulfur carrier)-SH + AH2 + 2 S-adenosyl-L-methionine = 2-methylsulfanyl-N(6)-dimethylallyladenosine(37) in tRNA + (sulfur carrier)-H + 5'-deoxyadenosine + L-methionine + A + S-adenosyl-L-homocysteine + 2 H(+). Catalyzes the methylthiolation of N6-(dimethylallyl)adenosine (i(6)A), leading to the formation of 2-methylthio-N6-(dimethylallyl)adenosine (ms(2)i(6)A) at position 37 in tRNAs that read codons beginning with uridine. The polypeptide is tRNA-2-methylthio-N(6)-dimethylallyladenosine synthase (Mycobacterium sp. (strain KMS)).